The sequence spans 131 residues: Small ribosomal subunit protein uS8 (131 aa).

This sequence belongs to the universal ribosomal protein uS8 family. As to quaternary structure, part of the 30S ribosomal subunit. Contacts proteins S5 and S12.

Its function is as follows. One of the primary rRNA binding proteins, it binds directly to 16S rRNA central domain where it helps coordinate assembly of the platform of the 30S subunit. The chain is Small ribosomal subunit protein uS8 from Chlorobium phaeovibrioides (strain DSM 265 / 1930) (Prosthecochloris vibrioformis (strain DSM 265)).